The chain runs to 185 residues: GTP cyclohydrolase 1 (185 aa).

Cys-75, His-78, and Cys-146 together coordinate Zn(2+).

It belongs to the GTP cyclohydrolase I family. As to quaternary structure, toroid-shaped homodecamer, composed of two pentamers of five dimers.

It carries out the reaction GTP + H2O = 7,8-dihydroneopterin 3'-triphosphate + formate + H(+). The protein operates within cofactor biosynthesis; 7,8-dihydroneopterin triphosphate biosynthesis; 7,8-dihydroneopterin triphosphate from GTP: step 1/1. The chain is GTP cyclohydrolase 1 from Alkalilimnicola ehrlichii (strain ATCC BAA-1101 / DSM 17681 / MLHE-1).